Reading from the N-terminus, the 188-residue chain is dCTP deaminase (188 aa).

Position 109-114 (109-114 (KSTYAR)) interacts with dCTP. E135 serves as the catalytic Proton donor/acceptor. Q154, Y168, and Q178 together coordinate dCTP.

The protein belongs to the dCTP deaminase family. As to quaternary structure, homotrimer.

The enzyme catalyses dCTP + H2O + H(+) = dUTP + NH4(+). Its pathway is pyrimidine metabolism; dUMP biosynthesis; dUMP from dCTP (dUTP route): step 1/2. Functionally, catalyzes the deamination of dCTP to dUTP. The chain is dCTP deaminase from Helicobacter pylori (strain P12).